The primary structure comprises 662 residues: Acyl-coenzyme A oxidase acox-1.4 (662 aa).

FAD-binding positions include 148-151, 156-157, and glycine 190; these read YAQT and GT. Substrate contacts are provided by residues 284-287 and arginine 294; that span reads KVNH. FAD is bound by residues arginine 319 and 339–342; that span reads QQHR. The ATP site is built by histidine 341, serine 391, histidine 395, and glutamine 403. Glycine 410 contributes to the FAD binding site. 432–433 contacts substrate; that stretch reads YE. The active-site Proton acceptor is glutamate 433. Glutamate 435 is a binding site for FAD. ATP-binding positions include 526 to 529 and tyrosine 574; that span reads RASR. Residues 660–662 carry the Microbody targeting signal motif; the sequence is AKL.

It belongs to the acyl-CoA oxidase family. In terms of assembly, homodimer. FAD serves as cofactor.

It localises to the peroxisome. It carries out the reaction asc-C9-CoA + O2 = asc-DeltaC9-CoA + H2O2. It participates in lipid metabolism; peroxisomal fatty acid beta-oxidation. Its activity is regulated as follows. Activated by ATP. ATP binding leads to a conformational change that promotes FAD cofactor binding and enzyme activity. ATP binding likely occurs during acox-1.4 folding and/or dimer formation. Functionally, involved in the first step of peroxisomal beta-oxidation by catalyzing the desaturation of fatty acid-derived side chains of ascaroside pheromones, which regulates development and behavior. Specifically, shortens ascarosides with a 9-carbon side chain (asc-C9) and, in association with acox-1.1, may contribute to the shortening of ascarosides with a 11-carbon side chain (asc-C11). May contribute to the production of indol-3-carbonyl(IC)-ascarosides in association with acox-1.1 and acox-3. In Caenorhabditis elegans, this protein is Acyl-coenzyme A oxidase acox-1.4.